The following is a 201-amino-acid chain: Large ribosomal subunit protein bL25 (201 aa).

The protein belongs to the bacterial ribosomal protein bL25 family. CTC subfamily. Part of the 50S ribosomal subunit; part of the 5S rRNA/L5/L18/L25 subcomplex. Contacts the 5S rRNA. Binds to the 5S rRNA independently of L5 and L18.

Its function is as follows. This is one of the proteins that binds to the 5S RNA in the ribosome where it forms part of the central protuberance. This is Large ribosomal subunit protein bL25 from Akkermansia muciniphila (strain ATCC BAA-835 / DSM 22959 / JCM 33894 / BCRC 81048 / CCUG 64013 / CIP 107961 / Muc).